The sequence spans 402 residues: Iripin-8 (402 aa).

The first 16 residues, 1 to 16 (MTRLLWLFAAITASLA), serve as a signal peptide directing secretion. N-linked (GlcNAc...) asparagine glycosylation is found at asparagine 164 and asparagine 230.

This sequence belongs to the serpin family. In terms of assembly, interacts with host thrombin/F2. Interacts with host coagulation factor VII/F7 (activated). Interacts with host coagulation factor X/F10 (activated). Interacts with host coagulation factor XII/F12 (activated). Interacts with host coagulation factor IX/F9 (activated). Interacts with host plasmin/PLG. Interacts with host protein C/PROC (activated). In terms of tissue distribution, saliva (at protein level). Salivary gland. Midgut. Low-level expression in ovary.

The protein localises to the secreted. In terms of biological role, serine protease inhibitor that modulates blood feeding of ticks on vertebrate species. Inhibits the intrinsic and common pathways of blood coagulation in the host. Inhibits host thrombin, factor VIIa, factor Xa, factor XIa, factor XIIa, plasmin and activated protein C. Inhibits host trypsin and kallikrein. Reduces host complement activity. Does not affect proliferation of CD4+ T-cells and neutrophil migration. The protein is Iripin-8 of Ixodes ricinus (Common tick).